A 1210-amino-acid polypeptide reads, in one-letter code: Epidermal growth factor receptor (1210 aa).

The N-terminal stretch at 1-24 is a signal peptide; sequence MRPSGTARTTLLVLLTALCAAGGA. Over 25–647 the chain is Extracellular; the sequence is LEEKKVCQGT…VWPSGPKIPS (623 aa). C31 and C58 are disulfide-bonded. Residues 75–300 form an Approximate repeat; sequence DLSFLKTIQE…CVKKCPRNYV (226 aa). N128, N175, and N196 each carry an N-linked (GlcNAc...) asparagine glycan. 13 disulfides stabilise this stretch: C157–C187, C190–C199, C194–C207, C215–C223, C219–C231, C232–C240, C236–C248, C251–C260, C264–C291, C295–C307, C311–C326, C329–C333, and C337–C362. S229 is modified (phosphoserine). N-linked (GlcNAc...) asparagine glycans are attached at residues N352, N413, and N444. The stretch at 390-600 is one Approximate repeat; sequence RELEILKTVK…CVKTCPAGIM (211 aa). Disulfide bonds link C470–C499, C506–C515, C510–C523, C526–C535, C539–C555, C558–C571, C562–C579, C582–C591, C595–C617, C620–C628, and C624–C636. N-linked (GlcNAc...) asparagine glycosylation is present at N528. The N-linked (GlcNAc...) asparagine glycan is linked to N568. N-linked (GlcNAc...) asparagine glycosylation is found at N603 and N623. Residues 648–670 traverse the membrane as a helical segment; it reads IATGIVGGLLFIVVVALGIGLFM. The Cytoplasmic portion of the chain corresponds to 671-1210; the sequence is RRRHIVRKRT…APPSSEFIGA (540 aa). Position 680 is a phosphothreonine; by PKC and PKD/PRKD1 (T680). The tract at residues 690-706 is important for dimerization, phosphorylation and activation; the sequence is LVEPLTPSGEAPNQAHL. T695 carries the phosphothreonine; by PKD/PRKD1 modification. Phosphoserine is present on S697. Positions 714–981 constitute a Protein kinase domain; it reads FKKIKVLGSG…KMARDPQRYL (268 aa). Residue K718 forms a Glycyl lysine isopeptide (Lys-Gly) (interchain with G-Cter in ubiquitin) linkage. Residue 720-728 participates in ATP binding; it reads LGSGAFGTV. Residue K739 forms a Glycyl lysine isopeptide (Lys-Gly) (interchain with G-Cter in ubiquitin) linkage. Residue K747 coordinates ATP. Position 747 is an N6-(2-hydroxyisobutyryl)lysine (K747). Residues K756 and K759 each participate in a glycyl lysine isopeptide (Lys-Gly) (interchain with G-Cter in ubiquitin) cross-link. Residue 792–793 coordinates ATP; sequence TQ. The Proton acceptor role is filled by D839. D857 lines the ATP pocket. Residue K869 forms a Glycyl lysine isopeptide (Lys-Gly) (interchain with G-Cter in ubiquitin) linkage. Position 871 is a phosphotyrosine (Y871). Glycyl lysine isopeptide (Lys-Gly) (interchain with G-Cter in ubiquitin) cross-links involve residues K931, K962, and K972. 2 positions are modified to phosphoserine: S993 and S997. Phosphotyrosine; by autocatalysis is present on residues Y1000 and Y1018. Residues S1028 and S1041 each carry the phosphoserine modification. Residue T1043 is modified to Phosphothreonine. At S1044 the chain carries Phosphoserine. C1051 carries S-palmitoyl cysteine lipidation. Y1069 bears the Phosphotyrosine mark. Residues S1070 and S1071 each carry the phosphoserine modification. Phosphotyrosine; by autocatalysis occurs at positions 1092 and 1110. Positions 1113 to 1137 are disordered; sequence QPLHPAPGRDLHYQNPHSNAVGNPE. The span at 1127–1137 shows a compositional bias: polar residues; it reads NPHSNAVGNPE. C1146 carries S-palmitoyl cysteine lipidation. A Phosphoserine modification is found at S1166. A Phosphotyrosine; by autocatalysis modification is found at Y1172. Y1197 carries the phosphotyrosine modification. An Omega-N-methylarginine modification is found at R1199.

This sequence belongs to the protein kinase superfamily. Tyr protein kinase family. EGF receptor subfamily. In terms of assembly, binding of the ligand triggers homo- and/or heterodimerization of the receptor triggering its autophosphorylation. Heterodimer with ERBB2. Forms a complex with CCDC88A/GIV (via SH2-like region) and GNAI3 which leads to enhanced EGFR signaling and triggering of cell migration; binding of CCDC88A requires autophosphorylation of the EGFR C-terminal region, and ligand stimulation is required for recruitment of GNAI3 to the complex. Interacts with ERRFI1; inhibits dimerization of the kinase domain and autophosphorylation. Part of a complex with ERBB2 and either PIK3C2A or PIK3C2B. Interacts with GRB2; an adapter protein coupling the receptor to downstream signaling pathways. Interacts with GAB2; involved in signaling downstream of EGFR. Interacts with STAT3; mediates EGFR downstream signaling in cell proliferation. Interacts with RIPK1; involved in NF-kappa-B activation. Interacts (autophosphorylated) with CBL, CBLB and CBLC; involved in EGFR ubiquitination and regulation; interaction with CBL is reduced in the presence of tensin TNS4. Interacts with SOCS5; regulates EGFR degradation through ELOC- and ELOB-mediated ubiquitination and proteasomal degradation. Interacts with PRMT5; methylates EGFR and enhances interaction with PTPN6. Interacts (phosphorylated) with PTPN6; inhibits EGFR-dependent activation of MAPK/ERK. Interacts with COPG1; essential for regulation of EGF-dependent nuclear transport of EGFR by retrograde trafficking from the Golgi to the ER. Interacts with TNK2; this interaction is dependent on EGF stimulation and kinase activity of EGFR. Interacts with PCNA; positively regulates PCNA. Interacts with PELP1. Interacts with MUC1. Interacts with AP2M1. Interacts with FER. Interacts (via SH2 domains) with GRB2, NCK1 and NCK2. Interacts with EPS8; mediates EPS8 phosphorylation. Interacts with ATXN2. Interacts with GAREM1. Interacts (ubiquitinated) with ANKRD13A/B/D; the interaction is direct and may regulate EGFR internalization after EGF stimulation. Interacts with GPER1; the interaction occurs in an estrogen-dependent manner. Interacts (via C-terminal cytoplasmic kinase domain) with ZPR1 (via zinc fingers). Interacts with RNF115 and RNF126. Interacts with GPRC5A (via its transmembrane domain). Interacts with FAM83B; positively regulates EGFR inducing its autophosphorylation in absence of stimulation by EGF. Interacts with LAPTM4B; positively correlates with EGFR activation. Interacts with STX19. Interacts with CD44. Interacts with PGRMC1; the interaction requires PGRMC1 homodimerization. Interacts with PIKFYVE. Interacts with NEU3. Interacts with TRAF4. Interacts with the ant venom OMEGA-myrmeciitoxin(02)-Mg1a. Interacts with CD82; this interaction facilitates ligand-induced endocytosis of the receptor and its subsequent desensitization. In terms of processing, monoubiquitinated and polyubiquitinated upon EGF stimulation; which does not affect tyrosine kinase activity or signaling capacity but may play a role in lysosomal targeting. Polyubiquitin linkage is mainly through 'Lys-63', but linkage through 'Lys-48', 'Lys-11' and 'Lys-29' also occurs. Deubiquitinated by OTUD7B, preventing degradation. Ubiquitinated by RNF115 and RNF126. Ubiquitinated by ZNRF1 or CBL at different lysines in response to EGF stimulation; leading to recruitment of the ESCRT machinery and subsequent degradation in the lysosomes. Deubiquitinated by UCHL1 leading to the inhibition of its degradation. Post-translationally, phosphorylated on Tyr residues in response to EGF. Phosphorylation at Ser-697 is partial and occurs only if Thr-695 is phosphorylated. Phosphorylation at Thr-680 and Thr-695 by PRKD1 inhibits EGF-induced MAPK8/JNK1 activation. Dephosphorylation by PTPRJ prevents endocytosis and stabilizes the receptor at the plasma membrane. Autophosphorylation at Tyr-1199 is stimulated by methylation at Arg-1199 and enhances interaction with PTPN6. Autophosphorylation at Tyr-1092 and/or Tyr-1110 recruits STAT3. Dephosphorylated by PTPN1 and PTPN2. Palmitoylated on Cys residues by ZDHHC20. Palmitoylation inhibits internalization after ligand binding, and increases the persistence of tyrosine-phosphorylated EGFR at the cell membrane. Palmitoylation increases the amplitude and duration of EGFR signaling. In terms of processing, methylated. Methylation at Arg-1199 by PRMT5 stimulates phosphorylation at Tyr-1197.

The protein localises to the cell membrane. Its subcellular location is the endoplasmic reticulum membrane. It localises to the golgi apparatus membrane. The protein resides in the nucleus membrane. It is found in the endosome. The protein localises to the endosome membrane. Its subcellular location is the nucleus. It carries out the reaction L-tyrosyl-[protein] + ATP = O-phospho-L-tyrosyl-[protein] + ADP + H(+). Its activity is regulated as follows. Endocytosis and inhibition of the activated EGFR by phosphatases like PTPRJ and PTPRK constitute immediate regulatory mechanisms. Upon EGF-binding phosphorylates EPS15 that regulates EGFR endocytosis and activity. Moreover, inducible feedback inhibitors including LRIG1, SOCS4, SOCS5 and ERRFI1 constitute alternative regulatory mechanisms for the EGFR signaling. Receptor tyrosine kinase binding ligands of the EGF family and activating several signaling cascades to convert extracellular cues into appropriate cellular responses. Known ligands include EGF, TGFA/TGF-alpha, AREG, epigen/EPGN, BTC/betacellulin, epiregulin/EREG and HBEGF/heparin-binding EGF. Ligand binding triggers receptor homo- and/or heterodimerization and autophosphorylation on key cytoplasmic residues. The phosphorylated receptor recruits adapter proteins like GRB2 which in turn activates complex downstream signaling cascades. Activates at least 4 major downstream signaling cascades including the RAS-RAF-MEK-ERK, PI3 kinase-AKT, PLCgamma-PKC and STATs modules. May also activate the NF-kappa-B signaling cascade. Also directly phosphorylates other proteins like RGS16, activating its GTPase activity and probably coupling the EGF receptor signaling to the G protein-coupled receptor signaling. Also phosphorylates MUC1 and increases its interaction with SRC and CTNNB1/beta-catenin. Positively regulates cell migration via interaction with CCDC88A/GIV which retains EGFR at the cell membrane following ligand stimulation, promoting EGFR signaling which triggers cell migration. Plays a role in enhancing learning and memory performance. Plays a role in mammalian pain signaling (long-lasting hypersensitivity). This Mus musculus (Mouse) protein is Epidermal growth factor receptor.